Consider the following 223-residue polypeptide: MSNDTLFISLGSTCGIAYQLQKLGLKKESLPFDWVKSDNITSICHIIKNGFDSFGEFSQLELQRQSTKHPVLETDDWISTENTVSYVYRNKIGTQFFHDFPDQFDSETSSIYINFKNKYIRRFDRFYGLFSSGKKLVFIRDEFKPNKLSRESVEELIDLLVSMLSNNTTINFILCIHNPSNKSFGWIDSLEKKYNFIKIIIDNNKFNGWQRDNLNWKEILLNE.

This is an uncharacterized protein from Acanthamoeba polyphaga (Amoeba).